The following is a 93-amino-acid chain: uncharacterized protein (93 aa).

This is an uncharacterized protein from Saimiriine herpesvirus 2 (strain 11) (SaHV-2).